The primary structure comprises 144 residues: Sentan (144 aa).

Residues 1-31 (MCGCRASVPSTKHYSVNPAPTTRSPPAAAGM) are disordered. Positions 18 to 29 (PAPTTRSPPAAA) are enriched in low complexity.

It belongs to the S-100 family.

It localises to the cell projection. The protein localises to the cilium. May be a component of the linker structure that bridges the ciliary membrane and peripheral singlet microtubules. The chain is Sentan from Gallus gallus (Chicken).